Consider the following 122-residue polypeptide: uncharacterized protein (122 aa).

The segment covering 1-15 (MAEPGGRGDYRKDGR) has biased composition (basic and acidic residues). The segment at 1–49 (MAEPGGRGDYRKDGRLPSLSRSPLSTTLGTSPACGLEIPPTSGARPDGS) is disordered. Positions 16–32 (LPSLSRSPLSTTLGTSP) are enriched in low complexity.

This is an uncharacterized protein from Homo sapiens (Human).